Here is a 93-residue protein sequence, read N- to C-terminus: Pyrimidine/purine nucleoside phosphorylase (93 aa).

It belongs to the nucleoside phosphorylase PpnP family.

The enzyme catalyses a purine D-ribonucleoside + phosphate = a purine nucleobase + alpha-D-ribose 1-phosphate. It catalyses the reaction adenosine + phosphate = alpha-D-ribose 1-phosphate + adenine. It carries out the reaction cytidine + phosphate = cytosine + alpha-D-ribose 1-phosphate. The catalysed reaction is guanosine + phosphate = alpha-D-ribose 1-phosphate + guanine. The enzyme catalyses inosine + phosphate = alpha-D-ribose 1-phosphate + hypoxanthine. It catalyses the reaction thymidine + phosphate = 2-deoxy-alpha-D-ribose 1-phosphate + thymine. It carries out the reaction uridine + phosphate = alpha-D-ribose 1-phosphate + uracil. The catalysed reaction is xanthosine + phosphate = alpha-D-ribose 1-phosphate + xanthine. Its function is as follows. Catalyzes the phosphorolysis of diverse nucleosides, yielding D-ribose 1-phosphate and the respective free bases. Can use uridine, adenosine, guanosine, cytidine, thymidine, inosine and xanthosine as substrates. Also catalyzes the reverse reactions. The protein is Pyrimidine/purine nucleoside phosphorylase of Hahella chejuensis (strain KCTC 2396).